Consider the following 262-residue polypeptide: Probable carboxylesterase SOBER1-like (262 aa).

Catalysis depends on charge relay system residues Ser151, Asp205, and His237.

The protein belongs to the AB hydrolase superfamily. AB hydrolase 2 family.

Functionally, carboxylesterase. This is Probable carboxylesterase SOBER1-like from Arabidopsis thaliana (Mouse-ear cress).